A 218-amino-acid polypeptide reads, in one-letter code: MFEGPLQDLIDELSRLPGVGPKSAQRIAFHLLNVDPDDITRLQDALGAVRDGVRFCRICCNISRDEVCRICNDSGRDRGLICVVEEPKDIQVIERTGEFRGRYHVLGGALDPLANVGPRELTISTLLQRIGGVLDDRELADSTPDTPLLDDKPQIHEVILATDPNTEGEATASYLARLLQDFPDLVVSRLASGMPLGGDLEFVDELTLSRALSGRLPL.

A C4-type zinc finger spans residues 56 to 71 (CRICCNISRDEVCRIC). A Toprim domain is found at 79–195 (GLICVVEEPK…VVSRLASGMP (117 aa)).

This sequence belongs to the RecR family.

In terms of biological role, may play a role in DNA repair. It seems to be involved in an RecBC-independent recombinational process of DNA repair. It may act with RecF and RecO. In Corynebacterium efficiens (strain DSM 44549 / YS-314 / AJ 12310 / JCM 11189 / NBRC 100395), this protein is Recombination protein RecR.